Reading from the N-terminus, the 252-residue chain is PF03932 family protein CutC (252 aa).

The protein belongs to the CutC family.

It localises to the cytoplasm. The protein is PF03932 family protein CutC of Serratia proteamaculans (strain 568).